A 658-amino-acid polypeptide reads, in one-letter code: Threonine--tRNA ligase (658 aa).

Residues 1-64 (MSNTVSLQFP…GASGKLEIIT (64 aa)) form the TGS domain. Positions 246–548 (DHRRLGREMD…LIENFAGHMP (303 aa)) are catalytic. Positions 343, 394, and 525 each coordinate Zn(2+).

It belongs to the class-II aminoacyl-tRNA synthetase family. Homodimer. Zn(2+) serves as cofactor.

It is found in the cytoplasm. The catalysed reaction is tRNA(Thr) + L-threonine + ATP = L-threonyl-tRNA(Thr) + AMP + diphosphate + H(+). Functionally, catalyzes the attachment of threonine to tRNA(Thr) in a two-step reaction: L-threonine is first activated by ATP to form Thr-AMP and then transferred to the acceptor end of tRNA(Thr). Also edits incorrectly charged L-seryl-tRNA(Thr). The polypeptide is Threonine--tRNA ligase (Brucella abortus (strain S19)).